Here is a 432-residue protein sequence, read N- to C-terminus: EF-hand calcium-binding domain-containing protein 3 (432 aa).

2 consecutive EF-hand domains span residues A45–N80 and L81–F116. Ca(2+) contacts are provided by D94, D96, D98, K100, and D105. Y273 carries the phosphotyrosine modification. A disordered region spans residues N394–Q432. Positions S399 to L411 are enriched in low complexity. Basic residues predominate over residues R420 to Q432.

The polypeptide is EF-hand calcium-binding domain-containing protein 3 (Efcab3) (Rattus norvegicus (Rat)).